The chain runs to 622 residues: Putative E3 ubiquitin-protein ligase ORTHRUS 4 (622 aa).

The PHD-type zinc finger occupies 12 to 62; sequence DGVCMRCQVTPPSEETLTCGTCVTPWHVSCLLPESLASSTGDWECPDCSGV. The RING-type 1 zinc finger occupies 129–169; sequence CSICIQLPERPVTTPCGHNFCLKCFEKWAVGQGKLTCMICR. A YDG domain is found at 258-407; that stretch reads TRNQGVLVGE…HKMCRYLFVR (150 aa). Residues 498 to 555 form an RING-type 2 zinc finger; it reads CQICRKVLSLPVTTPCAHNFCKACLEAKFAGITQLRDRSNGVRKLRAKKNIMTCPCCT. Positions 566-602 form a coiled coil; it reads QVNREMMEIIENFKKSEEEAEVAESSNISEEEEEESE. Positions 579 to 622 are disordered; it reads KKSEEEAEVAESSNISEEEEEESEPPTKKIKMDNNSVGDTSLSA. Positions 611-622 are enriched in polar residues; it reads DNNSVGDTSLSA.

It is found in the nucleus. It catalyses the reaction S-ubiquitinyl-[E2 ubiquitin-conjugating enzyme]-L-cysteine + [acceptor protein]-L-lysine = [E2 ubiquitin-conjugating enzyme]-L-cysteine + N(6)-ubiquitinyl-[acceptor protein]-L-lysine.. It functions in the pathway protein modification; protein ubiquitination. Functionally, E3 ubiquitin-protein ligase. May participate in CpG methylation-dependent transcriptional regulation. The protein is Putative E3 ubiquitin-protein ligase ORTHRUS 4 (ORTH4) of Arabidopsis thaliana (Mouse-ear cress).